The sequence spans 363 residues: NAD(P)H-quinone oxidoreductase subunit 1, chloroplastic (363 aa).

Helical transmembrane passes span 28 to 48 (WVFVPILIFIVGITISVLAIV), 98 to 118 (FSFGPAISVISIILSYSVIPF), 129 to 149 (IGVFLWIAISSIAPIGLLMSG), 253 to 273 (FGLFYVASYLNLLVSSLFVTV), 300 to 320 (VFVTIIGIFITLVKTFLFIFV), and 336 to 356 (LLNLGWKFLLPISLGNLLLTT).

Belongs to the complex I subunit 1 family. NDH is composed of at least 16 different subunits, 5 of which are encoded in the nucleus.

The protein localises to the plastid. It is found in the chloroplast thylakoid membrane. The enzyme catalyses a plastoquinone + NADH + (n+1) H(+)(in) = a plastoquinol + NAD(+) + n H(+)(out). The catalysed reaction is a plastoquinone + NADPH + (n+1) H(+)(in) = a plastoquinol + NADP(+) + n H(+)(out). Functionally, NDH shuttles electrons from NAD(P)H:plastoquinone, via FMN and iron-sulfur (Fe-S) centers, to quinones in the photosynthetic chain and possibly in a chloroplast respiratory chain. The immediate electron acceptor for the enzyme in this species is believed to be plastoquinone. Couples the redox reaction to proton translocation, and thus conserves the redox energy in a proton gradient. The sequence is that of NAD(P)H-quinone oxidoreductase subunit 1, chloroplastic from Phaseolus vulgaris (Kidney bean).